We begin with the raw amino-acid sequence, 359 residues long: uncharacterized protein (359 aa).

46 to 53 serves as a coordination point for ATP; sequence GPKSSGKS.

This sequence belongs to the archaeal ATPase family.

This is an uncharacterized protein from Methanocaldococcus jannaschii (strain ATCC 43067 / DSM 2661 / JAL-1 / JCM 10045 / NBRC 100440) (Methanococcus jannaschii).